Consider the following 632-residue polypeptide: Chaperone protein HtpG (632 aa).

The a; substrate-binding stretch occupies residues 1–339 (MAHETMSFQA…SADLPLNVSR (339 aa)). Residues 340-559 (EILQESRDVK…DNDMSGYLQR (220 aa)) are b. Positions 560-632 (MLKAAGQNAP…TNALLLSRAA (73 aa)) are c.

This sequence belongs to the heat shock protein 90 family. As to quaternary structure, homodimer.

It is found in the cytoplasm. Molecular chaperone. Has ATPase activity. This is Chaperone protein HtpG from Burkholderia lata (strain ATCC 17760 / DSM 23089 / LMG 22485 / NCIMB 9086 / R18194 / 383).